The chain runs to 396 residues: Elongation factor Tu (396 aa).

Positions 10 to 206 (KPHLNIGTIG…AVDENVPDPV (197 aa)) constitute a tr-type G domain. Residues 19–26 (GHVDHGKT) form a G1 region. 19–26 (GHVDHGKT) contributes to the GTP binding site. Threonine 26 contacts Mg(2+). The interval 62–66 (GITIN) is G2. Positions 83-86 (DAPG) are G3. Residues 83-87 (DAPGH) and 138-141 (NKSD) each bind GTP. The G4 stretch occupies residues 138–141 (NKSD). Residues 176 to 178 (SAL) form a G5 region.

This sequence belongs to the TRAFAC class translation factor GTPase superfamily. Classic translation factor GTPase family. EF-Tu/EF-1A subfamily. As to quaternary structure, monomer.

Its subcellular location is the cytoplasm. The catalysed reaction is GTP + H2O = GDP + phosphate + H(+). GTP hydrolase that promotes the GTP-dependent binding of aminoacyl-tRNA to the A-site of ribosomes during protein biosynthesis. This chain is Elongation factor Tu, found in Kocuria rhizophila (strain ATCC 9341 / DSM 348 / NBRC 103217 / DC2201).